Reading from the N-terminus, the 282-residue chain is Succinate dehydrogenase [ubiquinone] iron-sulfur subunit, mitochondrial (282 aa).

The N-terminal 30 residues, 1–30, are a transit peptide targeting the mitochondrion; that stretch reads MAATVGVSLKRGFPAAVLGRVGLQFQACRG. A 2Fe-2S ferredoxin-type domain is found at 42–135; it reads KKFAIYRWDP…VSKIYPLPHM (94 aa). 2 positions are modified to N6-acetyllysine: K53 and K57. 4 residues coordinate [2Fe-2S] cluster: C95, C100, C103, and C115. The segment at 148–220 is interaction with SDHAF1; it reads FYAQYKSIEP…PAVLMQAYRW (73 aa). A 4Fe-4S ferredoxin-type domain is found at 178 to 208; the sequence is DREKLDGLYECILCACCSTSCPSYWWNGDKY. Positions 188, 191, and 194 each coordinate [4Fe-4S] cluster. C198 serves as a coordination point for [3Fe-4S] cluster. W203 provides a ligand contact to a ubiquinone. The [3Fe-4S] cluster site is built by C245 and C251. C255 serves as a coordination point for [4Fe-4S] cluster.

Belongs to the succinate dehydrogenase/fumarate reductase iron-sulfur protein family. As to quaternary structure, component of complex II composed of four subunits: the flavoprotein (FP) SDHA, iron-sulfur protein (IP) SDHB, and a cytochrome b560 composed of SDHC and SDHD. Interacts with SDHAF1; the interaction is required for iron-sulfur cluster incorporation into SDHB. It depends on [2Fe-2S] cluster as a cofactor. The cofactor is [3Fe-4S] cluster. [4Fe-4S] cluster serves as cofactor.

The protein localises to the mitochondrion inner membrane. The enzyme catalyses a quinone + succinate = fumarate + a quinol. The catalysed reaction is (R)-malate + a quinone = enol-oxaloacetate + a quinol. It carries out the reaction (S)-malate + a quinone = enol-oxaloacetate + a quinol. It participates in carbohydrate metabolism; tricarboxylic acid cycle; fumarate from succinate (eukaryal route): step 1/1. Its activity is regulated as follows. Enol-oxaloacetate inhibits the succinate dehydrogenase activity. In terms of biological role, iron-sulfur protein (IP) subunit of the succinate dehydrogenase complex (mitochondrial respiratory chain complex II), responsible for transferring electrons from succinate to ubiquinone (coenzyme Q). SDH also oxidizes malate to the non-canonical enol form of oxaloacetate, enol-oxaloacetate. Enol-oxaloacetate, which is a potent inhibitor of the succinate dehydrogenase activity, is further isomerized into keto-oxaloacetate. The chain is Succinate dehydrogenase [ubiquinone] iron-sulfur subunit, mitochondrial (Sdhb) from Mus musculus (Mouse).